The chain runs to 272 residues: 3-methyl-2-oxobutanoate hydroxymethyltransferase (272 aa).

Positions 43 and 82 each coordinate Mg(2+). 3-methyl-2-oxobutanoate contacts are provided by residues 43–44 (DS), D82, and K112. E114 provides a ligand contact to Mg(2+). E179 (proton acceptor) is an active-site residue.

The protein belongs to the PanB family. Homodecamer; pentamer of dimers. Mg(2+) is required as a cofactor.

It localises to the cytoplasm. The enzyme catalyses 3-methyl-2-oxobutanoate + (6R)-5,10-methylene-5,6,7,8-tetrahydrofolate + H2O = 2-dehydropantoate + (6S)-5,6,7,8-tetrahydrofolate. It functions in the pathway cofactor biosynthesis; (R)-pantothenate biosynthesis; (R)-pantoate from 3-methyl-2-oxobutanoate: step 1/2. Its function is as follows. Catalyzes the reversible reaction in which hydroxymethyl group from 5,10-methylenetetrahydrofolate is transferred onto alpha-ketoisovalerate to form ketopantoate. In Staphylococcus aureus (strain bovine RF122 / ET3-1), this protein is 3-methyl-2-oxobutanoate hydroxymethyltransferase.